The sequence spans 213 residues: Octanoyltransferase (213 aa).

The 183-residue stretch at 27–209 (AATPDEVWLC…RLLAAMPEPA (183 aa)) folds into the BPL/LPL catalytic domain. Substrate-binding positions include 66–73 (RGGQVTYH), 140–142 (ALG), and 153–155 (GVA). Residue C171 is the Acyl-thioester intermediate of the active site.

It belongs to the LipB family.

The protein resides in the cytoplasm. The enzyme catalyses octanoyl-[ACP] + L-lysyl-[protein] = N(6)-octanoyl-L-lysyl-[protein] + holo-[ACP] + H(+). It functions in the pathway protein modification; protein lipoylation via endogenous pathway; protein N(6)-(lipoyl)lysine from octanoyl-[acyl-carrier-protein]: step 1/2. Functionally, catalyzes the transfer of endogenously produced octanoic acid from octanoyl-acyl-carrier-protein onto the lipoyl domains of lipoate-dependent enzymes. Lipoyl-ACP can also act as a substrate although octanoyl-ACP is likely to be the physiological substrate. In Bordetella petrii (strain ATCC BAA-461 / DSM 12804 / CCUG 43448), this protein is Octanoyltransferase.